The following is an 83-amino-acid chain: Large ribosomal subunit protein uL24 (83 aa).

Belongs to the universal ribosomal protein uL24 family. As to quaternary structure, part of the 50S ribosomal subunit.

Its function is as follows. One of two assembly initiator proteins, it binds directly to the 5'-end of the 23S rRNA, where it nucleates assembly of the 50S subunit. Functionally, one of the proteins that surrounds the polypeptide exit tunnel on the outside of the subunit. In Symbiobacterium thermophilum (strain DSM 24528 / JCM 14929 / IAM 14863 / T), this protein is Large ribosomal subunit protein uL24.